Here is a 255-residue protein sequence, read N- to C-terminus: 4-hydroxy-tetrahydrodipicolinate reductase (255 aa).

NAD(+)-binding positions include 9 to 14 (GYRGKM), 89 to 91 (GTT), and 115 to 118 (APNF). Residue His-145 is the Proton donor/acceptor of the active site. His-146 is a (S)-2,3,4,5-tetrahydrodipicolinate binding site. Lys-149 serves as the catalytic Proton donor. 155 to 156 (GT) is a (S)-2,3,4,5-tetrahydrodipicolinate binding site.

This sequence belongs to the DapB family.

It localises to the cytoplasm. It carries out the reaction (S)-2,3,4,5-tetrahydrodipicolinate + NAD(+) + H2O = (2S,4S)-4-hydroxy-2,3,4,5-tetrahydrodipicolinate + NADH + H(+). The catalysed reaction is (S)-2,3,4,5-tetrahydrodipicolinate + NADP(+) + H2O = (2S,4S)-4-hydroxy-2,3,4,5-tetrahydrodipicolinate + NADPH + H(+). Its pathway is amino-acid biosynthesis; L-lysine biosynthesis via DAP pathway; (S)-tetrahydrodipicolinate from L-aspartate: step 4/4. Its function is as follows. Catalyzes the conversion of 4-hydroxy-tetrahydrodipicolinate (HTPA) to tetrahydrodipicolinate. In Streptococcus uberis (strain ATCC BAA-854 / 0140J), this protein is 4-hydroxy-tetrahydrodipicolinate reductase.